The following is a 489-amino-acid chain: Probable cytochrome P450 522A1 (489 aa).

Residues 1–21 (MILTIVIIILTVIFVNKYLLN) traverse the membrane as a helical segment. C433 is a heme binding site.

The protein belongs to the cytochrome P450 family. The cofactor is heme.

The protein resides in the membrane. This is Probable cytochrome P450 522A1 (cyp522A1) from Dictyostelium discoideum (Social amoeba).